We begin with the raw amino-acid sequence, 803 residues long: Regulatory protein SWI6 (803 aa).

Acidic residues predominate over residues 108-117 (EPETDQDEED). The tract at residues 108–150 (EPETDQDEEDPSHSKLPENKTKSENSKDNISSKRINNLQDMSL) is disordered. Residues 118-138 (PSHSKLPENKTKSENSKDNIS) are compositionally biased toward basic and acidic residues. Residues 139–149 (SKRINNLQDMS) show a composition bias toward polar residues. Ser-149 carries the phosphoserine modification. Ser-160 is subject to Phosphoserine; by CDC28. Disordered regions lie at residues 169–212 (TSVI…RTAG) and 266–288 (PTSL…QQQQ). Ser-176 carries the phosphoserine modification. 2 positions are modified to phosphothreonine: Thr-179 and Thr-182. Residues 270–288 (NNDSSNRNSEGGSSNQQQQ) show a composition bias toward low complexity. ANK repeat units lie at residues 318 to 346 (GNTP…NRLY), 347 to 383 (GDNM…CLIL), 384 to 469 (EDSM…QDSN), 470 to 498 (GDTC…DPFI), and 499 to 514 (ANKS…AGTS). Residues 512 to 540 (GTSKLQNTNGGDENSKMVSKGDYDGQKNG) form a disordered region. The span at 514–523 (SKLQNTNGGD) shows a compositional bias: polar residues. Residues 524–538 (ENSKMVSKGDYDGQK) show a composition bias toward basic and acidic residues. The residue at position 547 (Ser-547) is a Phosphoserine.

Component of the transcription complex MCB-binding factor (MBF) composed of SWI6 and MBP1. Component of the transcription complex SCB-binding factor (SBF) composed of SWI6 and SWI4. Interacts with MSA1 and STB1. Post-translationally, phosphorylated by CDC28 and dephosphorylated by CDC14.

Its subcellular location is the nucleus. The protein resides in the cytoplasm. Part of a complex involved in cell-cycle-dependent transcription. SWI4 and SWI6 are required for formation of the cell-cycle box factor-DNA complex. The repeated element in the upstream region of HO (5'-CACGAAAA-3') is called the cell cycle box (CCB). The chain is Regulatory protein SWI6 (SWI6) from Saccharomyces cerevisiae (strain ATCC 204508 / S288c) (Baker's yeast).